The sequence spans 112 residues: Ribosome-binding factor A (112 aa).

This sequence belongs to the RbfA family. In terms of assembly, monomer. Binds 30S ribosomal subunits, but not 50S ribosomal subunits or 70S ribosomes.

The protein localises to the cytoplasm. In terms of biological role, one of several proteins that assist in the late maturation steps of the functional core of the 30S ribosomal subunit. Associates with free 30S ribosomal subunits (but not with 30S subunits that are part of 70S ribosomes or polysomes). Required for efficient processing of 16S rRNA. May interact with the 5'-terminal helix region of 16S rRNA. The protein is Ribosome-binding factor A of Mycoplasmopsis pulmonis (strain UAB CTIP) (Mycoplasma pulmonis).